Consider the following 61-residue polypeptide: Small ribosomal subunit protein uS14 (61 aa).

Cys-24, Cys-27, Cys-40, and Cys-43 together coordinate Zn(2+).

It belongs to the universal ribosomal protein uS14 family. Zinc-binding uS14 subfamily. As to quaternary structure, part of the 30S ribosomal subunit. Contacts proteins S3 and S10. It depends on Zn(2+) as a cofactor.

Binds 16S rRNA, required for the assembly of 30S particles and may also be responsible for determining the conformation of the 16S rRNA at the A site. This Parafrankia sp. (strain EAN1pec) protein is Small ribosomal subunit protein uS14.